Consider the following 80-residue polypeptide: Exodeoxyribonuclease 7 small subunit (80 aa).

This sequence belongs to the XseB family. As to quaternary structure, heterooligomer composed of large and small subunits.

The protein localises to the cytoplasm. It catalyses the reaction Exonucleolytic cleavage in either 5'- to 3'- or 3'- to 5'-direction to yield nucleoside 5'-phosphates.. Bidirectionally degrades single-stranded DNA into large acid-insoluble oligonucleotides, which are then degraded further into small acid-soluble oligonucleotides. The protein is Exodeoxyribonuclease 7 small subunit of Edwardsiella ictaluri (strain 93-146).